Consider the following 227-residue polypeptide: Cytochrome c oxidase subunit 2 (227 aa).

At 1 to 14 (MAHPLQLGLQDASS) the chain is on the mitochondrial intermembrane side. A helical transmembrane segment spans residues 15–45 (PIMEELLYFHDHALMIVFLISSLVLYTISLM). The Mitochondrial matrix portion of the chain corresponds to 46–59 (LTTKLMHTSTMNAQ). Residues 60–87 (MVETMWTILPAVILTSIALPSLRILYMT) traverse the membrane as a helical segment. The Mitochondrial intermembrane segment spans residues 88–227 (DEINNPLLTI…HFETWSTLTS (140 aa)). Residues His-161, Cys-196, Glu-198, Cys-200, His-204, and Met-207 each coordinate Cu cation. Residue Glu-198 participates in Mg(2+) binding.

It belongs to the cytochrome c oxidase subunit 2 family. Component of the cytochrome c oxidase (complex IV, CIV), a multisubunit enzyme composed of 14 subunits. The complex is composed of a catalytic core of 3 subunits MT-CO1, MT-CO2 and MT-CO3, encoded in the mitochondrial DNA, and 11 supernumerary subunits COX4I, COX5A, COX5B, COX6A, COX6B, COX6C, COX7A, COX7B, COX7C, COX8 and NDUFA4, which are encoded in the nuclear genome. The complex exists as a monomer or a dimer and forms supercomplexes (SCs) in the inner mitochondrial membrane with NADH-ubiquinone oxidoreductase (complex I, CI) and ubiquinol-cytochrome c oxidoreductase (cytochrome b-c1 complex, complex III, CIII), resulting in different assemblies (supercomplex SCI(1)III(2)IV(1) and megacomplex MCI(2)III(2)IV(2)). Found in a complex with TMEM177, COA6, COX18, COX20, SCO1 and SCO2. Interacts with TMEM177 in a COX20-dependent manner. Interacts with COX20. Interacts with COX16. Cu cation serves as cofactor.

It localises to the mitochondrion inner membrane. The catalysed reaction is 4 Fe(II)-[cytochrome c] + O2 + 8 H(+)(in) = 4 Fe(III)-[cytochrome c] + 2 H2O + 4 H(+)(out). Functionally, component of the cytochrome c oxidase, the last enzyme in the mitochondrial electron transport chain which drives oxidative phosphorylation. The respiratory chain contains 3 multisubunit complexes succinate dehydrogenase (complex II, CII), ubiquinol-cytochrome c oxidoreductase (cytochrome b-c1 complex, complex III, CIII) and cytochrome c oxidase (complex IV, CIV), that cooperate to transfer electrons derived from NADH and succinate to molecular oxygen, creating an electrochemical gradient over the inner membrane that drives transmembrane transport and the ATP synthase. Cytochrome c oxidase is the component of the respiratory chain that catalyzes the reduction of oxygen to water. Electrons originating from reduced cytochrome c in the intermembrane space (IMS) are transferred via the dinuclear copper A center (CU(A)) of subunit 2 and heme A of subunit 1 to the active site in subunit 1, a binuclear center (BNC) formed by heme A3 and copper B (CU(B)). The BNC reduces molecular oxygen to 2 water molecules using 4 electrons from cytochrome c in the IMS and 4 protons from the mitochondrial matrix. This chain is Cytochrome c oxidase subunit 2 (MT-CO2), found in Galeopterus variegatus (Malayan flying lemur).